Here is a 154-residue protein sequence, read N- to C-terminus: Histone H2B type F-M (154 aa).

Residues 1 to 18 (MAAASAMAEASSETTSEE) show a composition bias toward low complexity. Residues 1–61 (MAAASAMAEA…RGDSFGDSFT (61 aa)) are disordered. Residues 34–50 (QKQKRRGCRGSRRRHAN) are compositionally biased toward basic residues.

Belongs to the histone H2B family. In terms of assembly, the nucleosome is a histone octamer containing two molecules each of H2A, H2B, H3 and H4 assembled in one H3-H4 heterotetramer and two H2A-H2B heterodimers. The octamer wraps approximately 147 bp of DNA.

Its subcellular location is the nucleus. The protein resides in the chromosome. Functionally, core component of nucleosome. Nucleosomes wrap and compact DNA into chromatin, limiting DNA accessibility to the cellular machineries which require DNA as a template. Histones thereby play a central role in transcription regulation, DNA repair, DNA replication and chromosomal stability. DNA accessibility is regulated via a complex set of post-translational modifications of histones, also called histone code, and nucleosome remodeling. This chain is Histone H2B type F-M, found in Homo sapiens (Human).